Consider the following 187-residue polypeptide: dTTP/UTP pyrophosphatase (187 aa).

D68 acts as the Proton acceptor in catalysis.

This sequence belongs to the Maf family. YhdE subfamily. Requires a divalent metal cation as cofactor.

The protein localises to the cytoplasm. It catalyses the reaction dTTP + H2O = dTMP + diphosphate + H(+). The catalysed reaction is UTP + H2O = UMP + diphosphate + H(+). Functionally, nucleoside triphosphate pyrophosphatase that hydrolyzes dTTP and UTP. May have a dual role in cell division arrest and in preventing the incorporation of modified nucleotides into cellular nucleic acids. This chain is dTTP/UTP pyrophosphatase, found in Thermus thermophilus (strain ATCC BAA-163 / DSM 7039 / HB27).